We begin with the raw amino-acid sequence, 233 residues long: tRNA (guanine-N(7)-)-methyltransferase (233 aa).

The interval 1-23 (MSPQDRPSRTTEAFFGRRRGKPV) is disordered. Positions 64, 89, 116, and 138 each coordinate S-adenosyl-L-methionine. Residue Asp138 is part of the active site. Substrate contacts are provided by residues Lys142, Asp174, and 212-215 (TRYE).

It belongs to the class I-like SAM-binding methyltransferase superfamily. TrmB family.

It carries out the reaction guanosine(46) in tRNA + S-adenosyl-L-methionine = N(7)-methylguanosine(46) in tRNA + S-adenosyl-L-homocysteine. It participates in tRNA modification; N(7)-methylguanine-tRNA biosynthesis. Its function is as follows. Catalyzes the formation of N(7)-methylguanine at position 46 (m7G46) in tRNA. This is tRNA (guanine-N(7)-)-methyltransferase from Mesorhizobium japonicum (strain LMG 29417 / CECT 9101 / MAFF 303099) (Mesorhizobium loti (strain MAFF 303099)).